We begin with the raw amino-acid sequence, 556 residues long: Protein F37C4.5 (556 aa).

Residue alanine 2 is modified to N-acetylalanine.

This Caenorhabditis elegans protein is Protein F37C4.5.